Consider the following 357-residue polypeptide: Peptide chain release factor 1 (357 aa).

An N5-methylglutamine modification is found at Gln232.

Belongs to the prokaryotic/mitochondrial release factor family. Methylated by PrmC. Methylation increases the termination efficiency of RF1.

The protein resides in the cytoplasm. Functionally, peptide chain release factor 1 directs the termination of translation in response to the peptide chain termination codons UAG and UAA. This Nitratidesulfovibrio vulgaris (strain ATCC 29579 / DSM 644 / CCUG 34227 / NCIMB 8303 / VKM B-1760 / Hildenborough) (Desulfovibrio vulgaris) protein is Peptide chain release factor 1.